A 493-amino-acid polypeptide reads, in one-letter code: Glutamyl-tRNA(Gln) amidotransferase subunit A (493 aa).

Residues Lys78 and Ser158 each act as charge relay system in the active site. Ser182 acts as the Acyl-ester intermediate in catalysis.

This sequence belongs to the amidase family. GatA subfamily. Heterotrimer of A, B and C subunits.

The catalysed reaction is L-glutamyl-tRNA(Gln) + L-glutamine + ATP + H2O = L-glutaminyl-tRNA(Gln) + L-glutamate + ADP + phosphate + H(+). Its function is as follows. Allows the formation of correctly charged Gln-tRNA(Gln) through the transamidation of misacylated Glu-tRNA(Gln) in organisms which lack glutaminyl-tRNA synthetase. The reaction takes place in the presence of glutamine and ATP through an activated gamma-phospho-Glu-tRNA(Gln). The sequence is that of Glutamyl-tRNA(Gln) amidotransferase subunit A from Methylorubrum extorquens (strain PA1) (Methylobacterium extorquens).